The following is a 127-amino-acid chain: UPF0325 protein VV1_1856 (127 aa).

This sequence belongs to the UPF0325 family.

This Vibrio vulnificus (strain CMCP6) protein is UPF0325 protein VV1_1856.